The following is a 350-amino-acid chain: Methionine import ATP-binding protein MetN 1 (350 aa).

Residues isoleucine 12 to valine 251 enclose the ABC transporter domain. Glycine 48–serine 55 contacts ATP.

This sequence belongs to the ABC transporter superfamily. Methionine importer (TC 3.A.1.24) family. As to quaternary structure, the complex is composed of two ATP-binding proteins (MetN), two transmembrane proteins (MetI) and a solute-binding protein (MetQ).

The protein resides in the cell membrane. It catalyses the reaction L-methionine(out) + ATP + H2O = L-methionine(in) + ADP + phosphate + H(+). The catalysed reaction is D-methionine(out) + ATP + H2O = D-methionine(in) + ADP + phosphate + H(+). In terms of biological role, part of the ABC transporter complex MetNIQ involved in methionine import. Responsible for energy coupling to the transport system. This is Methionine import ATP-binding protein MetN 1 from Oenococcus oeni (strain ATCC BAA-331 / PSU-1).